Reading from the N-terminus, the 163-residue chain is NADH-quinone oxidoreductase subunit I (163 aa).

2 consecutive 4Fe-4S ferredoxin-type domains span residues 54–84 (LRRY…IDSA) and 94–123 (TRYD…ETHI). The [4Fe-4S] cluster site is built by C64, C67, C70, C74, C103, C106, C109, and C113.

Belongs to the complex I 23 kDa subunit family. In terms of assembly, NDH-1 is composed of 14 different subunits. Subunits NuoA, H, J, K, L, M, N constitute the membrane sector of the complex. [4Fe-4S] cluster is required as a cofactor.

Its subcellular location is the cell inner membrane. It carries out the reaction a quinone + NADH + 5 H(+)(in) = a quinol + NAD(+) + 4 H(+)(out). Functionally, NDH-1 shuttles electrons from NADH, via FMN and iron-sulfur (Fe-S) centers, to quinones in the respiratory chain. The immediate electron acceptor for the enzyme in this species is believed to be ubiquinone. Couples the redox reaction to proton translocation (for every two electrons transferred, four hydrogen ions are translocated across the cytoplasmic membrane), and thus conserves the redox energy in a proton gradient. In Xanthomonas campestris pv. campestris (strain 8004), this protein is NADH-quinone oxidoreductase subunit I.